A 158-amino-acid chain; its full sequence is Regulator of sigma D (158 aa).

The protein belongs to the Rsd/AlgQ family. As to quaternary structure, interacts with RpoD.

The protein resides in the cytoplasm. Its function is as follows. Binds RpoD and negatively regulates RpoD-mediated transcription activation by preventing the interaction between the primary sigma factor RpoD with the catalytic core of the RNA polymerase and with promoter DNA. May be involved in replacement of the RNA polymerase sigma subunit from RpoD to RpoS during the transition from exponential growth to the stationary phase. The polypeptide is Regulator of sigma D (Escherichia coli (strain UTI89 / UPEC)).